A 439-amino-acid chain; its full sequence is Proline--tRNA ligase (439 aa).

The protein belongs to the class-II aminoacyl-tRNA synthetase family. ProS type 2 subfamily. In terms of assembly, homodimer.

The protein localises to the cytoplasm. The catalysed reaction is tRNA(Pro) + L-proline + ATP = L-prolyl-tRNA(Pro) + AMP + diphosphate. In terms of biological role, catalyzes the attachment of proline to tRNA(Pro) in a two-step reaction: proline is first activated by ATP to form Pro-AMP and then transferred to the acceptor end of tRNA(Pro). In Nitrobacter winogradskyi (strain ATCC 25391 / DSM 10237 / CIP 104748 / NCIMB 11846 / Nb-255), this protein is Proline--tRNA ligase.